Consider the following 350-residue polypeptide: D-alanine--D-alanine ligase (350 aa).

The region spanning 135–335 is the ATP-grasp domain; that stretch reads KLYAKNLGVK…LAQSLPKTPK (201 aa). Residue 164–219 coordinates ATP; it reads KPSFNFPFIVKPNNAGSSLGVSVVKEEKELAYALDGAFEYSKEVLIEPFIQRVKEY. Mg(2+)-binding residues include Asp291, Glu303, and Asn305.

It belongs to the D-alanine--D-alanine ligase family. The cofactor is Mg(2+). Requires Mn(2+) as cofactor.

The protein resides in the cytoplasm. It catalyses the reaction 2 D-alanine + ATP = D-alanyl-D-alanine + ADP + phosphate + H(+). The protein operates within cell wall biogenesis; peptidoglycan biosynthesis. Cell wall formation. The protein is D-alanine--D-alanine ligase of Helicobacter acinonychis (strain Sheeba).